The chain runs to 452 residues: UDP-N-acetylmuramate--L-alanine ligase (452 aa).

Residue 119-125 coordinates ATP; sequence GAHGKTS.

Belongs to the MurCDEF family.

It localises to the cytoplasm. The enzyme catalyses UDP-N-acetyl-alpha-D-muramate + L-alanine + ATP = UDP-N-acetyl-alpha-D-muramoyl-L-alanine + ADP + phosphate + H(+). It participates in cell wall biogenesis; peptidoglycan biosynthesis. Cell wall formation. The protein is UDP-N-acetylmuramate--L-alanine ligase of Streptococcus mutans serotype c (strain ATCC 700610 / UA159).